A 458-amino-acid chain; its full sequence is tRNA modification GTPase MnmE (458 aa).

Residues arginine 26, glutamate 88, and arginine 127 each coordinate (6S)-5-formyl-5,6,7,8-tetrahydrofolate. In terms of domain architecture, TrmE-type G spans 224 to 378; the sequence is GLSTAIIGRP…IEDRINQLFF (155 aa). K(+) is bound at residue asparagine 234. GTP-binding positions include 234-239, 253-259, and 278-281; these read NVGKSS, TDIAGTT, and DTAG. Serine 238 provides a ligand contact to Mg(2+). K(+)-binding residues include threonine 253, isoleucine 255, and threonine 258. Threonine 259 is a Mg(2+) binding site. Position 458 (lysine 458) interacts with (6S)-5-formyl-5,6,7,8-tetrahydrofolate.

It belongs to the TRAFAC class TrmE-Era-EngA-EngB-Septin-like GTPase superfamily. TrmE GTPase family. In terms of assembly, homodimer. Heterotetramer of two MnmE and two MnmG subunits. It depends on K(+) as a cofactor.

The protein resides in the cytoplasm. In terms of biological role, exhibits a very high intrinsic GTPase hydrolysis rate. Involved in the addition of a carboxymethylaminomethyl (cmnm) group at the wobble position (U34) of certain tRNAs, forming tRNA-cmnm(5)s(2)U34. In Streptococcus pyogenes serotype M12 (strain MGAS9429), this protein is tRNA modification GTPase MnmE.